A 739-amino-acid chain; its full sequence is Exocyst complex component 3-like protein (739 aa).

Disordered regions lie at residues 1–21 (MDSK…PEWP) and 698–718 (AALS…RRAL). The segment at 1-370 (MDSKIQPTLR…DVSQLEPLLT (370 aa)) is mediates interaction with EXOC2, EXOC4 and EXOC5.

It belongs to the SEC6 family. Interacts with EXOC2, EXOC4 and EXOC5; may be part of the exocyst. Ubiquitously expressed.

It is found in the cytoplasmic vesicle. It localises to the secretory vesicle. In terms of biological role, as part of the exocyst, may play a role in regulated exocytosis of insulin granules. The protein is Exocyst complex component 3-like protein (Exoc3l1) of Mus musculus (Mouse).